Here is a 306-residue protein sequence, read N- to C-terminus: UDP-3-O-acyl-N-acetylglucosamine deacetylase (306 aa).

Residues histidine 79, histidine 239, and aspartate 243 each contribute to the Zn(2+) site. The Proton donor role is filled by histidine 266.

It belongs to the LpxC family. Zn(2+) serves as cofactor.

It catalyses the reaction a UDP-3-O-[(3R)-3-hydroxyacyl]-N-acetyl-alpha-D-glucosamine + H2O = a UDP-3-O-[(3R)-3-hydroxyacyl]-alpha-D-glucosamine + acetate. The protein operates within glycolipid biosynthesis; lipid IV(A) biosynthesis; lipid IV(A) from (3R)-3-hydroxytetradecanoyl-[acyl-carrier-protein] and UDP-N-acetyl-alpha-D-glucosamine: step 2/6. In terms of biological role, catalyzes the hydrolysis of UDP-3-O-myristoyl-N-acetylglucosamine to form UDP-3-O-myristoylglucosamine and acetate, the committed step in lipid A biosynthesis. The polypeptide is UDP-3-O-acyl-N-acetylglucosamine deacetylase (Actinobacillus pleuropneumoniae serotype 7 (strain AP76)).